Reading from the N-terminus, the 361-residue chain is MIPKEEIMGIFEKYNKDEVTIVTVGSHTSLHILKGAKLEGFSTAVITTRDRDIPYKRFGVADKFIYVDKFSDISKEEIQQQLRDMNAIIVPHGSFIAYCGLDNVEDTFKVPMFGNRAILRWEAERDLEGQLLGGSGLRIPKKYGGPDDIDGPVMVKFPGARGGRGYFPCSTVEEFWRKIDEFKAKGILTEDDVAKAHIEEYVVGANYCIHYFYSPLKDQVELMGIDRRYESSIDGLVRVPAKDQLELSIDPSYVITGNFPVVIRESLLPQVFDMGDKLATKAKELVKPGMLGPFCLQSLCNENLELVVFEMSARVDGGTNTFMNGSPYSCLYTGEPLSMGQRIAREIKLALELKMIDKVIS.

5-amino-1-(5-phospho-beta-D-ribosyl)imidazole-4-carboxamide is bound by residues His27 and Ser94. The ATP-grasp domain maps to 116-348 (RAILRWEAER…MGQRIAREIK (233 aa)). Residues 146–208 (PDDI…ANYC) and Glu230 each bind ATP. Position 258 (Asn258) interacts with 5-amino-1-(5-phospho-beta-D-ribosyl)imidazole-4-carboxamide. Gln297 and Glu310 together coordinate Mg(2+).

This sequence belongs to the phosphohexose mutase family. Mg(2+) serves as cofactor. The cofactor is Mn(2+).

It carries out the reaction 5-amino-1-(5-phospho-beta-D-ribosyl)imidazole-4-carboxamide + formate + ATP = 5-formamido-1-(5-phospho-D-ribosyl)imidazole-4-carboxamide + ADP + phosphate. The protein operates within purine metabolism; IMP biosynthesis via de novo pathway; 5-formamido-1-(5-phospho-D-ribosyl)imidazole-4-carboxamide from 5-amino-1-(5-phospho-D-ribosyl)imidazole-4-carboxamide (formate route): step 1/1. Functionally, catalyzes the ATP- and formate-dependent formylation of 5-aminoimidazole-4-carboxamide-1-beta-d-ribofuranosyl 5'-monophosphate (AICAR) to 5-formaminoimidazole-4-carboxamide-1-beta-d-ribofuranosyl 5'-monophosphate (FAICAR) in the absence of folates. The sequence is that of 5-formaminoimidazole-4-carboxamide-1-(beta)-D-ribofuranosyl 5'-monophosphate synthetase from Methanococcus maripaludis (strain C7 / ATCC BAA-1331).